A 327-amino-acid polypeptide reads, in one-letter code: UPF0665 family protein C23C4.06c (327 aa).

This sequence belongs to the UPF0665 family.

The protein resides in the cytoplasm. Its subcellular location is the nucleus. The chain is UPF0665 family protein C23C4.06c from Schizosaccharomyces pombe (strain 972 / ATCC 24843) (Fission yeast).